The following is a 214-amino-acid chain: Endoplasmic reticulum vesicle protein 25 (214 aa).

An N-terminal signal peptide occupies residues 1 to 20; sequence MRSISTLLFIISTFISLVSA. Over 21-183 the chain is Lumenal; sequence LQLAIPATTN…TNESTNSRVK (163 aa). The region spanning 33-124 is the GOLD domain; the sequence is PFCIRDFVQE…VREIELDVES (92 aa). A helical membrane pass occupies residues 184-204; the sequence is WFSILVITSLVGLGAWQVQYL. Over 205–214 the chain is Cytoplasmic; sequence RHYFKVKHII.

The protein belongs to the EMP24/GP25L family.

The protein resides in the endoplasmic reticulum membrane. It localises to the golgi apparatus membrane. In terms of biological role, constituent of COPII-coated endoplasmic reticulum-derived transport vesicles. Required for efficient transport of a subset of secretory proteins to the Golgi. Facilitates retrograde transport from the Golgi to the endoplasmic reticulum. The chain is Endoplasmic reticulum vesicle protein 25 (ERV25) from Debaryomyces hansenii (strain ATCC 36239 / CBS 767 / BCRC 21394 / JCM 1990 / NBRC 0083 / IGC 2968) (Yeast).